Consider the following 200-residue polypeptide: ADP-ribosylation factor-like protein 4A (200 aa).

G2 is lipidated: N-myristoyl glycine. Residues 27-34, 75-79, and 134-137 contribute to the GTP site; these read GLDCAGKT, DVGGQ, and NKQD.

It belongs to the small GTPase superfamily. Arf family. In terms of assembly, interacts with CYTH2. Interacts with KPNA2; the interaction is direct. Does not interact with ARL4A. Myristoylated.

The protein localises to the cell membrane. The protein resides in the cytoplasm. Its subcellular location is the nucleus. It is found in the nucleolus. Functionally, small GTP-binding protein which cycles between an inactive GDP-bound and an active GTP-bound form, and the rate of cycling is regulated by guanine nucleotide exchange factors (GEF) and GTPase-activating proteins (GAP). GTP-binding protein that does not act as an allosteric activator of the cholera toxin catalytic subunit. Recruits CYTH1, CYTH2, CYTH3 and CYTH4 to the plasma membrane in GDP-bound form. This Homo sapiens (Human) protein is ADP-ribosylation factor-like protein 4A (ARL4A).